A 463-amino-acid chain; its full sequence is Adenylosuccinate synthetase, chloroplastic (463 aa).

GTP is bound by residues 44 to 50 (GDEGKGK) and 72 to 74 (GHT). Residue aspartate 45 is the Proton acceptor of the active site. The Mg(2+) site is built by aspartate 45 and glycine 72. IMP is bound by residues 45-48 (DEGK), 70-73 (NAGH), threonine 164, arginine 178, asparagine 256, threonine 271, and arginine 335. Histidine 73 (proton donor) is an active-site residue. A substrate-binding site is contributed by 331-337 (TTTGRPR). GTP contacts are provided by residues arginine 337, 363 to 365 (KLD), and 446 to 448 (GVG).

This sequence belongs to the adenylosuccinate synthetase family. In terms of assembly, homodimer. Requires Mg(2+) as cofactor.

The protein resides in the plastid. Its subcellular location is the chloroplast. The enzyme catalyses IMP + L-aspartate + GTP = N(6)-(1,2-dicarboxyethyl)-AMP + GDP + phosphate + 2 H(+). Its pathway is purine metabolism; AMP biosynthesis via de novo pathway; AMP from IMP: step 1/2. In terms of biological role, plays an important role in the de novo pathway and in the salvage pathway of purine nucleotide biosynthesis. Catalyzes the first committed step in the biosynthesis of AMP from IMP. The protein is Adenylosuccinate synthetase, chloroplastic of Chlamydomonas reinhardtii (Chlamydomonas smithii).